We begin with the raw amino-acid sequence, 156 residues long: MLPEPYRLHHRADFSRTVRRGQRIGRRDLVVHAFVHTYDELAHATERHGDPVAAGSFVRVGGPRFGLIVSKAVGSAVVRHRVARRLRHMCATLVDEVPADADVVIRALPGAATADSAELARQVRSGLRKLGVTPGGGRSPAPRAHSGARPRTDARS.

Residues 126 to 156 (GLRKLGVTPGGGRSPAPRAHSGARPRTDARS) form a disordered region.

This sequence belongs to the RnpA family. As to quaternary structure, consists of a catalytic RNA component (M1 or rnpB) and a protein subunit.

It carries out the reaction Endonucleolytic cleavage of RNA, removing 5'-extranucleotides from tRNA precursor.. Functionally, RNaseP catalyzes the removal of the 5'-leader sequence from pre-tRNA to produce the mature 5'-terminus. It can also cleave other RNA substrates such as 4.5S RNA. The protein component plays an auxiliary but essential role in vivo by binding to the 5'-leader sequence and broadening the substrate specificity of the ribozyme. This is Ribonuclease P protein component from Nocardia farcinica (strain IFM 10152).